A 66-amino-acid chain; its full sequence is Sarcoplasmic/endoplasmic reticulum calcium ATPase regulator ARLN (66 aa).

At methionine 1 the chain carries N-acetylmethionine. The tract at residues 1-38 is disordered; it reads MEVDVPGVDGRDGLRERRGLSEGGRQNLDVRPQSGANG. Positions 9 to 20 are enriched in basic and acidic residues; the sequence is DGRDGLRERRGL. The helical transmembrane segment at 45 to 65 threads the bilayer; sequence WLDLWLFIFFDVVVFLFVYFL.

Homooligomer. Can also form heterooligomers with other sarcoplasmic/endoplasmic reticulum calcium ATPase (SERCA) regulators ERLN, PLN, SLN and STRIT1/DWORF. Monomer. Interacts as a monomer with ATP2A2/SERCA2; the interaction results in inhibition of ATP2A2 Ca(2+) affinity.

The protein resides in the endoplasmic reticulum membrane. In terms of biological role, inhibits the activity of the calcium ATPases ATP2A2/SERCA2 and ATP2A3/SERCA3 by decreasing their apparent affinity for Ca(2+). The polypeptide is Sarcoplasmic/endoplasmic reticulum calcium ATPase regulator ARLN (ARLN) (Pongo abelii (Sumatran orangutan)).